The primary structure comprises 138 residues: ATP synthase epsilon chain 2 (138 aa).

It belongs to the ATPase epsilon chain family. F-type ATPases have 2 components, CF(1) - the catalytic core - and CF(0) - the membrane proton channel. CF(1) has five subunits: alpha(3), beta(3), gamma(1), delta(1), epsilon(1). CF(0) has three main subunits: a, b and c.

It localises to the cell inner membrane. Produces ATP from ADP in the presence of a proton gradient across the membrane. The chain is ATP synthase epsilon chain 2 from Syntrophotalea carbinolica (strain DSM 2380 / NBRC 103641 / GraBd1) (Pelobacter carbinolicus).